Reading from the N-terminus, the 448-residue chain is Glutamyl-tRNA reductase (448 aa).

Substrate contacts are provided by residues 49–52 (TCNR), Ser109, 114–116 (ETQ), and Gln120. Cys50 serves as the catalytic Nucleophile. Residue 189 to 194 (GAGEMS) coordinates NADP(+).

It belongs to the glutamyl-tRNA reductase family. In terms of assembly, homodimer.

The catalysed reaction is (S)-4-amino-5-oxopentanoate + tRNA(Glu) + NADP(+) = L-glutamyl-tRNA(Glu) + NADPH + H(+). It functions in the pathway porphyrin-containing compound metabolism; protoporphyrin-IX biosynthesis; 5-aminolevulinate from L-glutamyl-tRNA(Glu): step 1/2. Catalyzes the NADPH-dependent reduction of glutamyl-tRNA(Glu) to glutamate 1-semialdehyde (GSA). The protein is Glutamyl-tRNA reductase of Staphylococcus aureus (strain bovine RF122 / ET3-1).